Reading from the N-terminus, the 588-residue chain is Aspartate--tRNA ligase (588 aa).

Residue E172 coordinates L-aspartate. The tract at residues Q196–K199 is aspartate. Residue R218 coordinates L-aspartate. ATP-binding positions include R218–E220 and Q227. H449 lines the L-aspartate pocket. E483 lines the ATP pocket. An L-aspartate-binding site is contributed by R490. Residue G535–R538 coordinates ATP.

Belongs to the class-II aminoacyl-tRNA synthetase family. Type 1 subfamily. Homodimer.

The protein localises to the cytoplasm. The enzyme catalyses tRNA(Asp) + L-aspartate + ATP = L-aspartyl-tRNA(Asp) + AMP + diphosphate. Its function is as follows. Catalyzes the attachment of L-aspartate to tRNA(Asp) in a two-step reaction: L-aspartate is first activated by ATP to form Asp-AMP and then transferred to the acceptor end of tRNA(Asp). In Haemophilus influenzae (strain ATCC 51907 / DSM 11121 / KW20 / Rd), this protein is Aspartate--tRNA ligase.